The sequence spans 321 residues: Methionyl-tRNA formyltransferase (321 aa).

112 to 115 (SILP) provides a ligand contact to (6S)-5,6,7,8-tetrahydrofolate.

This sequence belongs to the Fmt family.

The catalysed reaction is L-methionyl-tRNA(fMet) + (6R)-10-formyltetrahydrofolate = N-formyl-L-methionyl-tRNA(fMet) + (6S)-5,6,7,8-tetrahydrofolate + H(+). Attaches a formyl group to the free amino group of methionyl-tRNA(fMet). The formyl group appears to play a dual role in the initiator identity of N-formylmethionyl-tRNA by promoting its recognition by IF2 and preventing the misappropriation of this tRNA by the elongation apparatus. This is Methionyl-tRNA formyltransferase from Shewanella piezotolerans (strain WP3 / JCM 13877).